The following is a 69-amino-acid chain: DNA gyrase inhibitor YacG (69 aa).

Positions 13, 16, 32, and 36 each coordinate Zn(2+).

The protein belongs to the DNA gyrase inhibitor YacG family. As to quaternary structure, interacts with GyrB. Zn(2+) is required as a cofactor.

In terms of biological role, inhibits all the catalytic activities of DNA gyrase by preventing its interaction with DNA. Acts by binding directly to the C-terminal domain of GyrB, which probably disrupts DNA binding by the gyrase. This Neisseria meningitidis serogroup C / serotype 2a (strain ATCC 700532 / DSM 15464 / FAM18) protein is DNA gyrase inhibitor YacG.